The following is a 344-amino-acid chain: UDP-3-O-acylglucosamine N-acyltransferase (344 aa).

His-248 serves as the catalytic Proton acceptor.

The protein belongs to the transferase hexapeptide repeat family. LpxD subfamily. As to quaternary structure, homotrimer.

The catalysed reaction is a UDP-3-O-[(3R)-3-hydroxyacyl]-alpha-D-glucosamine + a (3R)-hydroxyacyl-[ACP] = a UDP-2-N,3-O-bis[(3R)-3-hydroxyacyl]-alpha-D-glucosamine + holo-[ACP] + H(+). The protein operates within bacterial outer membrane biogenesis; LPS lipid A biosynthesis. Functionally, catalyzes the N-acylation of UDP-3-O-acylglucosamine using 3-hydroxyacyl-ACP as the acyl donor. Is involved in the biosynthesis of lipid A, a phosphorylated glycolipid that anchors the lipopolysaccharide to the outer membrane of the cell. The polypeptide is UDP-3-O-acylglucosamine N-acyltransferase (Prochlorococcus marinus subsp. pastoris (strain CCMP1986 / NIES-2087 / MED4)).